The following is a 424-amino-acid chain: Serine--tRNA ligase (424 aa).

Residue 231–233 participates in L-serine binding; the sequence is TAE. 262-264 contributes to the ATP binding site; sequence RAE. Glutamate 285 is a binding site for L-serine. 349–352 serves as a coordination point for ATP; it reads EISS. Residue serine 385 participates in L-serine binding.

This sequence belongs to the class-II aminoacyl-tRNA synthetase family. Type-1 seryl-tRNA synthetase subfamily. In terms of assembly, homodimer. The tRNA molecule binds across the dimer.

Its subcellular location is the cytoplasm. The catalysed reaction is tRNA(Ser) + L-serine + ATP = L-seryl-tRNA(Ser) + AMP + diphosphate + H(+). It catalyses the reaction tRNA(Sec) + L-serine + ATP = L-seryl-tRNA(Sec) + AMP + diphosphate + H(+). It functions in the pathway aminoacyl-tRNA biosynthesis; selenocysteinyl-tRNA(Sec) biosynthesis; L-seryl-tRNA(Sec) from L-serine and tRNA(Sec): step 1/1. Catalyzes the attachment of serine to tRNA(Ser). Is also able to aminoacylate tRNA(Sec) with serine, to form the misacylated tRNA L-seryl-tRNA(Sec), which will be further converted into selenocysteinyl-tRNA(Sec). This chain is Serine--tRNA ligase, found in Geobacillus kaustophilus (strain HTA426).